Reading from the N-terminus, the 301-residue chain is Acetylglutamate kinase (301 aa).

Residues 68–69, R90, and N195 each bind substrate; that span reads GG.

The protein belongs to the acetylglutamate kinase family. ArgB subfamily.

It is found in the cytoplasm. The enzyme catalyses N-acetyl-L-glutamate + ATP = N-acetyl-L-glutamyl 5-phosphate + ADP. The protein operates within amino-acid biosynthesis; L-arginine biosynthesis; N(2)-acetyl-L-ornithine from L-glutamate: step 2/4. Functionally, catalyzes the ATP-dependent phosphorylation of N-acetyl-L-glutamate. This is Acetylglutamate kinase from Pseudomonas putida (strain W619).